We begin with the raw amino-acid sequence, 85 residues long: Growth factor (85 aa).

Positions 1 to 19 are cleaved as a signal peptide; the sequence is MVPRDLVATLLCAMCIVQA. The region spanning 33–77 is the EGF-like domain; sequence RIKLCNDDYKNYCLNNGTCFTVALNNVSLNPFCACHINYVGSRCQ. Cystine bridges form between cysteine 37/cysteine 51, cysteine 45/cysteine 65, and cysteine 67/cysteine 76. N-linked (GlcNAc...) asparagine; by host glycosylation is found at asparagine 48 and asparagine 58.

The protein resides in the secreted. Stimulates the growth of some tissues. The protein is Growth factor (MGF) of Oryctolagus cuniculus (Rabbit).